The following is a 316-amino-acid chain: Retron Ec73 putative ribosyltransferase/DNA-binding protein (316 aa).

Possible ribosyltransferase/DNA-binding component of antiviral defense system retron Ec73, composed of a non-coding RNA (ncRNA) followed by this protein then a reverse transcriptase (RT). Expression of this retron confers protection against bacteriophages SECphi4, SECphi6, SECphi27 and P1. At multiplicity of infection (MOI) of 0.02 cultures grow normally when infected with SECphi4 without collapsing, at MOI 2 cultures enter growth stasis. The chain is Retron Ec73 putative ribosyltransferase/DNA-binding protein from Escherichia coli.